The chain runs to 232 residues: Uracil phosphoribosyltransferase (232 aa).

A GTP-binding site is contributed by 38 to 42 (KGLVK). 5-phospho-alpha-D-ribose 1-diphosphate-binding positions include arginine 87, arginine 112, and 140–148 (DPMIATGST). Uracil-binding positions include isoleucine 204 and 209–211 (GDA). Residue aspartate 210 coordinates 5-phospho-alpha-D-ribose 1-diphosphate.

It belongs to the UPRTase family. Mg(2+) serves as cofactor.

The enzyme catalyses UMP + diphosphate = 5-phospho-alpha-D-ribose 1-diphosphate + uracil. It functions in the pathway pyrimidine metabolism; UMP biosynthesis via salvage pathway; UMP from uracil: step 1/1. Its activity is regulated as follows. Allosterically activated by GTP. Functionally, catalyzes the conversion of uracil and 5-phospho-alpha-D-ribose 1-diphosphate (PRPP) to UMP and diphosphate. This Thermococcus sibiricus (strain DSM 12597 / MM 739) protein is Uracil phosphoribosyltransferase.